An 84-amino-acid chain; its full sequence is RNA-binding protein Hfq (84 aa).

The Sm domain occupies 9 to 68; sequence DPYLNTLRKERVPVSIYLVNGIKLQGQIESFDQFVILLKNTVSQMVYKHAISTVVPSRPV.

The protein belongs to the Hfq family. As to quaternary structure, homohexamer.

Its function is as follows. RNA chaperone that binds small regulatory RNA (sRNAs) and mRNAs to facilitate mRNA translational regulation in response to envelope stress, environmental stress and changes in metabolite concentrations. Also binds with high specificity to tRNAs. This is RNA-binding protein Hfq from Azotobacter vinelandii (strain DJ / ATCC BAA-1303).